The following is a 122-amino-acid chain: Small ribosomal subunit protein uS13 (122 aa).

The disordered stretch occupies residues 97 to 122; the sequence is PVRGQRTHTNAKTRKGRSKLPIAGKK.

The protein belongs to the universal ribosomal protein uS13 family. As to quaternary structure, part of the 30S ribosomal subunit. Forms a loose heterodimer with protein S19. Forms two bridges to the 50S subunit in the 70S ribosome.

Located at the top of the head of the 30S subunit, it contacts several helices of the 16S rRNA. In the 70S ribosome it contacts the 23S rRNA (bridge B1a) and protein L5 of the 50S subunit (bridge B1b), connecting the 2 subunits; these bridges are implicated in subunit movement. Contacts the tRNAs in the A and P-sites. The polypeptide is Small ribosomal subunit protein uS13 (Wolbachia pipientis subsp. Culex pipiens (strain wPip)).